Here is a 212-residue protein sequence, read N- to C-terminus: Pyridoxine/pyridoxamine 5'-phosphate oxidase (212 aa).

FMN-binding positions include 59–64, 74–75, Lys81, and Gln103; these read RMVLMK and YS. Lys64 provides a ligand contact to substrate. Substrate-binding residues include Tyr121 and Arg125. FMN contacts are provided by residues 138-139 and Trp183; that span reads QS. Position 189–191 (189–191) interacts with substrate; the sequence is RLH. Arg193 lines the FMN pocket.

This sequence belongs to the pyridoxamine 5'-phosphate oxidase family. As to quaternary structure, homodimer. It depends on FMN as a cofactor.

The catalysed reaction is pyridoxamine 5'-phosphate + O2 + H2O = pyridoxal 5'-phosphate + H2O2 + NH4(+). The enzyme catalyses pyridoxine 5'-phosphate + O2 = pyridoxal 5'-phosphate + H2O2. The protein operates within cofactor metabolism; pyridoxal 5'-phosphate salvage; pyridoxal 5'-phosphate from pyridoxamine 5'-phosphate: step 1/1. It functions in the pathway cofactor metabolism; pyridoxal 5'-phosphate salvage; pyridoxal 5'-phosphate from pyridoxine 5'-phosphate: step 1/1. Its function is as follows. Catalyzes the oxidation of either pyridoxine 5'-phosphate (PNP) or pyridoxamine 5'-phosphate (PMP) into pyridoxal 5'-phosphate (PLP). The sequence is that of Pyridoxine/pyridoxamine 5'-phosphate oxidase from Rhodopseudomonas palustris (strain BisB5).